An 86-amino-acid polypeptide reads, in one-letter code: MAEDMETKIKNYKTAPFDSRFPNQNQTRNCWQNYLDFHRCQKAMTAKGGDISVCEWYQRVYQSLCPTSWVTDWDEQRAEGTFPGKI.

At alanine 2 the chain carries N-acetylalanine. The CHCH domain occupies threonine 27 to tryptophan 73. Residues cysteine 30 to cysteine 40 carry the Cx9C motif motif. 2 cysteine pairs are disulfide-bonded: cysteine 30–cysteine 65 and cysteine 40–cysteine 54. Positions cysteine 54 to cysteine 65 match the Cx10C motif motif.

It belongs to the cytochrome c oxidase subunit 6B family. In terms of assembly, component of the cytochrome c oxidase (complex IV, CIV), a multisubunit enzyme composed of 14 subunits. The complex is composed of a catalytic core of 3 subunits MT-CO1, MT-CO2 and MT-CO3, encoded in the mitochondrial DNA, and 11 supernumerary subunits COX4I1 (or COX4I2), COX5A, COX5B, COX6A1 (or COX6A2), COX6B1 (or COX6B2), COX6C, COX7A2 (or COX7A1), COX7B, COX7C, COX8A and NDUFA4, which are encoded in the nuclear genome. The complex exists as a monomer or a dimer and forms supercomplexes (SCs) in the inner mitochondrial membrane with NADH-ubiquinone oxidoreductase (complex I, CI) and ubiquinol-cytochrome c oxidoreductase (cytochrome b-c1 complex, complex III, CIII), resulting in different assemblies (supercomplex SCI(1)III(2)IV(1) and megacomplex MCI(2)III(2)IV(2)).

The protein localises to the mitochondrion inner membrane. Its pathway is energy metabolism; oxidative phosphorylation. In terms of biological role, component of the cytochrome c oxidase, the last enzyme in the mitochondrial electron transport chain which drives oxidative phosphorylation. The respiratory chain contains 3 multisubunit complexes succinate dehydrogenase (complex II, CII), ubiquinol-cytochrome c oxidoreductase (cytochrome b-c1 complex, complex III, CIII) and cytochrome c oxidase (complex IV, CIV), that cooperate to transfer electrons derived from NADH and succinate to molecular oxygen, creating an electrochemical gradient over the inner membrane that drives transmembrane transport and the ATP synthase. Cytochrome c oxidase is the component of the respiratory chain that catalyzes the reduction of oxygen to water. Electrons originating from reduced cytochrome c in the intermembrane space (IMS) are transferred via the dinuclear copper A center (CU(A)) of subunit 2 and heme A of subunit 1 to the active site in subunit 1, a binuclear center (BNC) formed by heme A3 and copper B (CU(B)). The BNC reduces molecular oxygen to 2 water molecules using 4 electrons from cytochrome c in the IMS and 4 protons from the mitochondrial matrix. The protein is Cytochrome c oxidase subunit 6B1 (COX6B1) of Homo sapiens (Human).